The primary structure comprises 439 residues: MLRFAPSPTGDMHIGNLRAAIFNYIVAKQQHKPFLIRIEDTDKERNIEGKDQEILEILKFMGISWDKLVYQSHNIDYHREMAEKLLKENKAFYCYASTEFLEREKEKAKNEKRPFRYLDEWATLEKDKHHAPVVRLKAPNHAVSFNDAIKKEVKFEPDELDSFVLLRQDKSPTYNFACTCDDLLYEVSLIIRGEDHVSNTPKQILIQQALGSNDPIVYAHLPIILDEVSGKKMSKRDEASSVKWLLNQGFLPVAIANYLITIGNKVPKEVFSLDEAIEWFSLENLSNSPAHFNLKYLKHLNHEHLKLLDDEKLLKLTSIKDKNLLGLLRLFIEECGTLLELKEKISLFLEPKDIVKTYENEDFKERCLALFNALKSMDFQVYKDFESFKKEAMRLSQLKGKDFFKPLRILLTGNSHGVELPLIFPYIQSHYQEVLRLKA.

Positions 6–16 (PSPTGDMHIGN) match the 'HIGH' region motif. A 'KMSKS' region motif is present at residues 232 to 236 (KMSKR). Lys-235 lines the ATP pocket.

The protein belongs to the class-I aminoacyl-tRNA synthetase family. Glutamate--tRNA ligase type 1 subfamily. As to quaternary structure, monomer.

It localises to the cytoplasm. It carries out the reaction tRNA(Glu) + L-glutamate + ATP = L-glutamyl-tRNA(Glu) + AMP + diphosphate. Catalyzes the attachment of glutamate to tRNA(Glu) in a two-step reaction: glutamate is first activated by ATP to form Glu-AMP and then transferred to the acceptor end of tRNA(Glu). This is Glutamate--tRNA ligase 2 from Helicobacter pylori (strain HPAG1).